A 535-amino-acid polypeptide reads, in one-letter code: PAC-1 interacting and coiled-coil domain-containing protein 1 (535 aa).

The tract at residues 1-67 (MIITTPRRAN…KQTPPRSPVI (67 aa)) is disordered. Positions 36 to 57 (SSTTPSSIGSSSSSSSSYASST) are enriched in low complexity. Coiled-coil stretches lie at residues 109–172 (KLQY…RDLS) and 198–242 (SLMK…RQSL). 2 disordered regions span residues 254–277 (NESEDLGCGSSEQSGGSEGHNDEE) and 503–535 (TCRPTTTLISSTQPAQRSVSVEKNNNNNVHTHN). A compositionally biased stretch (polar residues) spans 503–525 (TCRPTTTLISSTQPAQRSVSVEK). Positions 526–535 (NNNNNVHTHN) are enriched in low complexity.

It belongs to the CCDC85 family. In terms of assembly, interacts with pac-1 and jac-1.

It is found in the cell junction. The protein localises to the adherens junction. In terms of biological role, linker protein which helps to recruit the Rho GTPase-activating protein, pac-1, to adherens junctions. The polypeptide is PAC-1 interacting and coiled-coil domain-containing protein 1 (Caenorhabditis elegans).